The sequence spans 147 residues: Spermidine export protein MdtJ (147 aa).

4 helical membrane passes run methionine 1–methionine 21, threonine 31–valine 51, valine 54–phenylalanine 74, and glutamate 81–valine 101. Residues threonine 105 to asparagine 117 are compositionally biased toward basic residues. Residues threonine 105–alanine 147 form a disordered region.

This sequence belongs to the drug/metabolite transporter (DMT) superfamily. Small multidrug resistance (SMR) (TC 2.A.7.1) family. MdtJ subfamily. As to quaternary structure, forms a complex with MdtI.

It localises to the cell inner membrane. Catalyzes the excretion of spermidine. The sequence is that of Spermidine export protein MdtJ from Yersinia pseudotuberculosis serotype O:3 (strain YPIII).